A 374-amino-acid polypeptide reads, in one-letter code: Translocating chain-associated membrane protein 1 (374 aa).

Over 1–29 (MAIRKKSNKNPPLLSHEFLLQNHADIVSC) the chain is Cytoplasmic. The chain crosses the membrane as a helical span at residues 30–50 (LAMLFLLGLMFEVTAKGAIIF). Residues 51-76 (VALQYNVTRPATEEQATESASLYHYG) are Lumenal-facing. N-linked (GlcNAc...) asparagine glycosylation occurs at Asn-56. The helical transmembrane segment at 77-97 (IKDLATVLFYMLVAIIIHAII) threads the bilayer. Residues 98–121 (QEYVLDKINRRMHFSKTKHSKFNE) lie on the Cytoplasmic side of the membrane. The TLC domain occupies 117–326 (SKFNESGQLS…NFQLRRWREH (210 aa)). A helical membrane pass occupies residues 122–142 (SGQLSAFYLFACVWGTFILIS). The Lumenal segment spans residues 143–159 (ENYISDPTILWRAYPHN). The chain crosses the membrane as a helical span at residues 160–180 (LMTFQTKFFYISQLAYWLHAF). The Cytoplasmic segment spans residues 181-192 (PELYFQKTKKED). A helical membrane pass occupies residues 193-213 (IPRQLVYIGLYLFHIAGAYLL). The Lumenal segment spans residues 214 to 217 (NLNH). A helical transmembrane segment spans residues 218-238 (LGLVLLVLHYFVEFLFHISRL). Over 239–251 (FYFSDEKYQKGFS) the chain is Cytoplasmic. The chain crosses the membrane as a helical span at residues 252 to 272 (LWAVLFVLGRLLTLILSVLTV). Residues 273-297 (GFGLARAENQKLDFSTGNFNVLAVR) are Lumenal-facing. A helical transmembrane segment spans residues 298–318 (IAVLASICITQAFMMWKFINF). The Cytoplasmic segment spans residues 319–374 (QLRRWREHSAFQAPPVKRKPAVTKGRSSRKGTENGVNGTVTSNGADSPRNRKEKSS). The tract at residues 333–374 (PVKRKPAVTKGRSSRKGTENGVNGTVTSNGADSPRNRKEKSS) is disordered. Residues 334-347 (VKRKPAVTKGRSSR) show a composition bias toward basic residues. The segment covering 352–363 (NGVNGTVTSNGA) has biased composition (polar residues). The residue at position 365 (Ser-365) is a Phosphoserine.

The protein belongs to the TRAM family. Interacts with SEC61B. May interact with Derlin-1/DERL1. In terms of processing, N-glycosylated.

It localises to the endoplasmic reticulum membrane. Functionally, involved in the translocation of nascent protein chains into or through the endoplasmic reticulum (ER) membrane by facilitating the proper chain positioning at the SEC61 channel. Regulates the exposure of nascent secretory protein chain to the cytosol during translocation into the ER. May affect the phospholipid bilayer in the vicinity of the lateral gate of the SEC61 channel, thereby facilitating ER protein transport. Intimately associates with transmembrane (TM) domain of nascent membrane proteins during the entire integration process into the ER membrane. Associates with the second TM domain of G-protein-coupled receptor opsin/OPSD nascent chain in the ER membrane, which may facilitate its integration into the membrane. Under conditions of ER stress, participates in the disposal of misfolded ER membrane proteins during the unfolded protein response (UPR), an integrated stress response (ISR) pathway, by selectively retrotranslocating misfolded ER-membrane proteins from the ER into the cytosol where they are ubiquitinated and degraded by the proteasome. The chain is Translocating chain-associated membrane protein 1 from Mus musculus (Mouse).